Here is a 670-residue protein sequence, read N- to C-terminus: Methionine--tRNA ligase (670 aa).

A 'HIGH' region motif is present at residues 14–24; it reads PYANGHLHLGH. Zn(2+)-binding residues include Cys-145, Cys-148, Cys-158, and Cys-161. The short motif at 330–334 is the 'KMSKS' region element; it reads KMSKS. Lys-333 contacts ATP. Residues 570–670 form the tRNA-binding domain; sequence DFAKVDLRIA…AGAFPGMKVK (101 aa).

Belongs to the class-I aminoacyl-tRNA synthetase family. MetG type 1 subfamily. Homodimer. Requires Zn(2+) as cofactor.

Its subcellular location is the cytoplasm. The catalysed reaction is tRNA(Met) + L-methionine + ATP = L-methionyl-tRNA(Met) + AMP + diphosphate. In terms of biological role, is required not only for elongation of protein synthesis but also for the initiation of all mRNA translation through initiator tRNA(fMet) aminoacylation. This Legionella pneumophila (strain Corby) protein is Methionine--tRNA ligase.